The primary structure comprises 565 residues: Oxygen-dependent choline dehydrogenase (565 aa).

6–35 (DYIIVGAGSAGNTLATRLTEDAGVTVLLLE) is an FAD binding site. The interval 182-201 (QQEGFGPMDRTVTKNGRRSS) is disordered. The active-site Proton acceptor is His-475.

This sequence belongs to the GMC oxidoreductase family. Requires FAD as cofactor.

The enzyme catalyses choline + A = betaine aldehyde + AH2. It catalyses the reaction betaine aldehyde + NAD(+) + H2O = glycine betaine + NADH + 2 H(+). It functions in the pathway amine and polyamine biosynthesis; betaine biosynthesis via choline pathway; betaine aldehyde from choline (cytochrome c reductase route): step 1/1. Its function is as follows. Involved in the biosynthesis of the osmoprotectant glycine betaine. Catalyzes the oxidation of choline to betaine aldehyde and betaine aldehyde to glycine betaine at the same rate. The protein is Oxygen-dependent choline dehydrogenase of Pseudomonas putida (strain ATCC 47054 / DSM 6125 / CFBP 8728 / NCIMB 11950 / KT2440).